The primary structure comprises 392 residues: Phosphoglycerate kinase (392 aa).

Substrate-binding positions include 21-23 (DMN), Arg36, 59-62 (HLGR), Arg114, and Arg147. Residues Lys198, Glu320, and 346–349 (GGDT) each bind ATP.

Belongs to the phosphoglycerate kinase family. In terms of assembly, monomer.

Its subcellular location is the cytoplasm. The enzyme catalyses (2R)-3-phosphoglycerate + ATP = (2R)-3-phospho-glyceroyl phosphate + ADP. It functions in the pathway carbohydrate degradation; glycolysis; pyruvate from D-glyceraldehyde 3-phosphate: step 2/5. This Neisseria meningitidis serogroup A / serotype 4A (strain DSM 15465 / Z2491) protein is Phosphoglycerate kinase.